The sequence spans 130 residues: D-ribose pyranase (130 aa).

The active-site Proton donor is the histidine 20. Substrate contacts are provided by residues aspartate 28, histidine 97, and 119-121; that span reads YAN.

This sequence belongs to the RbsD / FucU family. RbsD subfamily. Homodecamer.

The protein localises to the cytoplasm. The catalysed reaction is beta-D-ribopyranose = beta-D-ribofuranose. It functions in the pathway carbohydrate metabolism; D-ribose degradation; D-ribose 5-phosphate from beta-D-ribopyranose: step 1/2. Catalyzes the interconversion of beta-pyran and beta-furan forms of D-ribose. This chain is D-ribose pyranase, found in Bacillus pumilus (strain SAFR-032).